A 343-amino-acid chain; its full sequence is Glyceraldehyde-3-phosphate dehydrogenase (343 aa).

NAD(+) contacts are provided by residues 13–14 and Gly111; that span reads TI. Position 140–142 (140–142) interacts with D-glyceraldehyde 3-phosphate; sequence SCN. Cys141 acts as the Nucleophile in catalysis. Arg169 contributes to the NAD(+) binding site. 195-196 provides a ligand contact to D-glyceraldehyde 3-phosphate; sequence HA. Residue Gln302 coordinates NAD(+).

The protein belongs to the glyceraldehyde-3-phosphate dehydrogenase family. In terms of assembly, homotetramer.

Its subcellular location is the cytoplasm. It carries out the reaction D-glyceraldehyde 3-phosphate + phosphate + NADP(+) = (2R)-3-phospho-glyceroyl phosphate + NADPH + H(+). It catalyses the reaction D-glyceraldehyde 3-phosphate + phosphate + NAD(+) = (2R)-3-phospho-glyceroyl phosphate + NADH + H(+). It functions in the pathway carbohydrate degradation; glycolysis; pyruvate from D-glyceraldehyde 3-phosphate: step 1/5. The sequence is that of Glyceraldehyde-3-phosphate dehydrogenase from Hyperthermus butylicus (strain DSM 5456 / JCM 9403 / PLM1-5).